The chain runs to 436 residues: MGDILRDTADPQTPEELCRLYRSLTEQLRDQLQRIETDKQDLESQMLERISSLESRNLELREQIRQAEADKRYIETQKIRYEREVRKLKSESEQLRSPPLIIGTVVDVVDANRVIVRSSAGPRFLVRSSPSVNPDDIKPGARCTLNQQSLAIVELLPSSFDAQVYGMELVDSPQECYTDIGGLKEQINEVREAVELPLKRPELFTQIGIEPPKGVLLYGPPGTGKTLLAKAVAHETNAHFMRVVGSELVQKYIGEGARLVRELFDLAKKKAPTIIFIDEIDAVGASRTEANTSGDREVQRTLMQLLAGMDGFETRGDVKIIGATNRIDILDKALLRPGRFDRIIEIPLPDEEGRLSILKVHTRTLTMEETVNLPEIAGLTEGKNGADLRAICMEAGMYAIRNERPAITREDFLSAIEKVRLDFSHSPTDSEGRMFA.

A coiled-coil region spans residues 15-97; that stretch reads EELCRLYRSL…LKSESEQLRS (83 aa). Residues 222-227 and histidine 361 each bind ATP; that span reads GTGKTL. Residues 434–436 form a docks into pockets in the proteasome alpha-ring to cause gate opening region; the sequence is MFA.

This sequence belongs to the AAA ATPase family. As to quaternary structure, homohexamer. The hexameric complex has a two-ring architecture resembling a top hat that caps the 20S proteasome core at one or both ends. Upon ATP-binding, the C-terminus of PAN interacts with the alpha-rings of the proteasome core by binding to the intersubunit pockets.

The protein localises to the cytoplasm. ATPase which is responsible for recognizing, binding, unfolding and translocation of substrate proteins into the archaeal 20S proteasome core particle. Is essential for opening the gate of the 20S proteasome via an interaction with its C-terminus, thereby allowing substrate entry and access to the site of proteolysis. Thus, the C-termini of the proteasomal ATPase function like a 'key in a lock' to induce gate opening and therefore regulate proteolysis. Unfolding activity requires energy from ATP hydrolysis, whereas ATP binding alone promotes ATPase-20S proteasome association which triggers gate opening, and supports translocation of unfolded substrates. This Methanoregula boonei (strain DSM 21154 / JCM 14090 / 6A8) protein is Proteasome-activating nucleotidase.